A 408-amino-acid chain; its full sequence is S-adenosylmethionine synthase (408 aa).

140 to 145 (GQGSVD) is a binding site for ATP.

It belongs to the AdoMet synthase 2 family. The cofactor is Mg(2+).

The catalysed reaction is L-methionine + ATP + H2O = S-adenosyl-L-methionine + phosphate + diphosphate. The protein operates within amino-acid biosynthesis; S-adenosyl-L-methionine biosynthesis; S-adenosyl-L-methionine from L-methionine: step 1/1. Catalyzes the formation of S-adenosylmethionine from methionine and ATP. This is S-adenosylmethionine synthase from Caldivirga maquilingensis (strain ATCC 700844 / DSM 13496 / JCM 10307 / IC-167).